Consider the following 286-residue polypeptide: Putative inorganic pyrophosphatase C3A12.02 (286 aa).

R85 contacts diphosphate. D122, D127, and D159 together coordinate Mg(2+).

This sequence belongs to the PPase family. The cofactor is Mg(2+).

It is found in the cytoplasm. The enzyme catalyses diphosphate + H2O = 2 phosphate + H(+). This is Putative inorganic pyrophosphatase C3A12.02 from Schizosaccharomyces pombe (strain 972 / ATCC 24843) (Fission yeast).